Here is a 460-residue protein sequence, read N- to C-terminus: NADH-ubiquinone oxidoreductase chain 4 (460 aa).

The next 13 helical transmembrane spans lie at 22–42, 59–79, 94–113, 117–139, 148–168, 195–215, 231–251, 258–278, 286–306, 310–330, 343–362, 394–414, and 436–456; these read WLWS…LSWF, IDPL…LMIL, RIYI…AFSA, ILFY…RWGN, TYFL…LLFM, FWWT…GVHL, ILAA…IIML, MAYP…SICL, MIAY…LIQT, FAGA…LFCL, LLLA…WWLL, ILLT…MFLM, and LLLT…ELIW.

This sequence belongs to the complex I subunit 4 family.

The protein localises to the mitochondrion membrane. The catalysed reaction is a ubiquinone + NADH + 5 H(+)(in) = a ubiquinol + NAD(+) + 4 H(+)(out). Functionally, core subunit of the mitochondrial membrane respiratory chain NADH dehydrogenase (Complex I) that is believed to belong to the minimal assembly required for catalysis. Complex I functions in the transfer of electrons from NADH to the respiratory chain. The immediate electron acceptor for the enzyme is believed to be ubiquinone. The protein is NADH-ubiquinone oxidoreductase chain 4 (MTND4) of Scyliorhinus canicula (Small-spotted catshark).